A 157-amino-acid polypeptide reads, in one-letter code: Pyruvoyl-dependent arginine decarboxylase 2 (157 aa).

Ser-43 carries the post-translational modification Pyruvic acid (Ser).

This sequence belongs to the PdaD family. The cofactor is pyruvate.

The catalysed reaction is L-arginine + H(+) = agmatine + CO2. This chain is Pyruvoyl-dependent arginine decarboxylase 2 (pdaD2), found in Archaeoglobus fulgidus (strain ATCC 49558 / DSM 4304 / JCM 9628 / NBRC 100126 / VC-16).